A 242-amino-acid chain; its full sequence is Biosynthetic peptidoglycan transglycosylase (242 aa).

Residues 19–39 (LMVVLAIFWGGGIALFSVAPV) form a helical membrane-spanning segment.

It belongs to the glycosyltransferase 51 family.

The protein localises to the cell inner membrane. It carries out the reaction [GlcNAc-(1-&gt;4)-Mur2Ac(oyl-L-Ala-gamma-D-Glu-L-Lys-D-Ala-D-Ala)](n)-di-trans,octa-cis-undecaprenyl diphosphate + beta-D-GlcNAc-(1-&gt;4)-Mur2Ac(oyl-L-Ala-gamma-D-Glu-L-Lys-D-Ala-D-Ala)-di-trans,octa-cis-undecaprenyl diphosphate = [GlcNAc-(1-&gt;4)-Mur2Ac(oyl-L-Ala-gamma-D-Glu-L-Lys-D-Ala-D-Ala)](n+1)-di-trans,octa-cis-undecaprenyl diphosphate + di-trans,octa-cis-undecaprenyl diphosphate + H(+). The protein operates within cell wall biogenesis; peptidoglycan biosynthesis. In terms of biological role, peptidoglycan polymerase that catalyzes glycan chain elongation from lipid-linked precursors. The polypeptide is Biosynthetic peptidoglycan transglycosylase (Escherichia coli O81 (strain ED1a)).